We begin with the raw amino-acid sequence, 159 residues long: MPSFDVVSELDKHEVTNAVDNAIKELDRRYDLKGKGTFEFKELTVTLTAEADFQLEAMIEILKLALVKRKIDAKCLEIKDAYASGKLMKQEVTLREGIDKELAKKIVAHIKEAKLKVQAAIQGEQVRVTGKKRDDLQEAIAALRAYDSGMPLQFNNFRD.

The protein belongs to the YajQ family.

Its function is as follows. Nucleotide-binding protein. The protein is Nucleotide-binding protein PSPPH_4093 of Pseudomonas savastanoi pv. phaseolicola (strain 1448A / Race 6) (Pseudomonas syringae pv. phaseolicola (strain 1448A / Race 6)).